The primary structure comprises 455 residues: Glutamate--tRNA ligase (455 aa).

The 'HIGH' region motif lies at 8–18 (PSPTGYLHIGG). The short motif at 231–235 (RLSKR) is the 'KMSKS' region element. Lys-234 is an ATP binding site.

It belongs to the class-I aminoacyl-tRNA synthetase family. Glutamate--tRNA ligase type 1 subfamily. In terms of assembly, monomer.

It is found in the cytoplasm. It carries out the reaction tRNA(Glu) + L-glutamate + ATP = L-glutamyl-tRNA(Glu) + AMP + diphosphate. Its function is as follows. Catalyzes the attachment of glutamate to tRNA(Glu) in a two-step reaction: glutamate is first activated by ATP to form Glu-AMP and then transferred to the acceptor end of tRNA(Glu). The sequence is that of Glutamate--tRNA ligase from Vesicomyosocius okutanii subsp. Calyptogena okutanii (strain HA).